The chain runs to 299 residues: tRNA uridine(34) hydroxylase (299 aa).

The region spanning 132–226 (ASRPVVMLDT…YFEEVGGAHY (95 aa)) is the Rhodanese domain. Cys-186 (cysteine persulfide intermediate) is an active-site residue.

It belongs to the TrhO family.

The enzyme catalyses uridine(34) in tRNA + AH2 + O2 = 5-hydroxyuridine(34) in tRNA + A + H2O. Its function is as follows. Catalyzes oxygen-dependent 5-hydroxyuridine (ho5U) modification at position 34 in tRNAs. In Burkholderia pseudomallei (strain K96243), this protein is tRNA uridine(34) hydroxylase.